The sequence spans 181 residues: Shikimate kinase (181 aa).

Position 17–22 (17–22) interacts with ATP; sequence GAGKTT. Threonine 21 contacts Mg(2+). Residues aspartate 39, arginine 63, and glycine 85 each coordinate substrate. Position 122 (arginine 122) interacts with ATP. Residue arginine 141 coordinates substrate.

The protein belongs to the shikimate kinase family. Monomer. Mg(2+) serves as cofactor.

It localises to the cytoplasm. The catalysed reaction is shikimate + ATP = 3-phosphoshikimate + ADP + H(+). The protein operates within metabolic intermediate biosynthesis; chorismate biosynthesis; chorismate from D-erythrose 4-phosphate and phosphoenolpyruvate: step 5/7. Catalyzes the specific phosphorylation of the 3-hydroxyl group of shikimic acid using ATP as a cosubstrate. The chain is Shikimate kinase from Trichormus variabilis (strain ATCC 29413 / PCC 7937) (Anabaena variabilis).